The chain runs to 503 residues: Probable cytosol aminopeptidase (503 aa).

Mn(2+)-binding residues include K268 and D273. K280 is a catalytic residue. Residues D291, D350, and E352 each coordinate Mn(2+). R354 is an active-site residue.

This sequence belongs to the peptidase M17 family. Requires Mn(2+) as cofactor.

The protein localises to the cytoplasm. The catalysed reaction is Release of an N-terminal amino acid, Xaa-|-Yaa-, in which Xaa is preferably Leu, but may be other amino acids including Pro although not Arg or Lys, and Yaa may be Pro. Amino acid amides and methyl esters are also readily hydrolyzed, but rates on arylamides are exceedingly low.. It catalyses the reaction Release of an N-terminal amino acid, preferentially leucine, but not glutamic or aspartic acids.. Functionally, presumably involved in the processing and regular turnover of intracellular proteins. Catalyzes the removal of unsubstituted N-terminal amino acids from various peptides. The polypeptide is Probable cytosol aminopeptidase (Corynebacterium efficiens (strain DSM 44549 / YS-314 / AJ 12310 / JCM 11189 / NBRC 100395)).